Reading from the N-terminus, the 50-residue chain is Ornatin-E (50 aa).

The Cell attachment site motif lies at R42 to D44.

The protein belongs to the ornatin family.

Its subcellular location is the secreted. Its function is as follows. Potent inhibitor of fibrinogen interaction with platelet receptors expressed on glycoprotein IIb-IIIa complex. May prevent blood from clotting during either feeding and/or storage of ingested blood. In Placobdella ornata (Turtle leech), this protein is Ornatin-E.